Consider the following 254-residue polypeptide: Pectate lyase E (254 aa).

Positions 1–17 (MYQPLLLLPLLLTSAFA) are cleaved as a signal peptide. Residues 227–254 (TNNNSKEPKKKSSGPSSYCKYSEPLSKC) form a disordered region. A glycan (N-linked (GlcNAc...) asparagine) is linked at N229. The span at 239-254 (SGPSSYCKYSEPLSKC) shows a compositional bias: low complexity.

Belongs to the polysaccharide lyase 3 family. The cofactor is Ca(2+).

It localises to the secreted. It catalyses the reaction Eliminative cleavage of (1-&gt;4)-alpha-D-galacturonan to give oligosaccharides with 4-deoxy-alpha-D-galact-4-enuronosyl groups at their non-reducing ends.. Functionally, pectinolytic enzyme consist of four classes of enzymes: pectin lyase, polygalacturonase, pectin methylesterase and rhamnogalacturonase. Among pectinolytic enzymes, pectin lyase is the most important in depolymerization of pectin, since it cleaves internal glycosidic bonds of highly methylated pectins. Favors pectate, the anion, over pectin, the methyl ester. The polypeptide is Pectate lyase E (plyE) (Emericella nidulans (strain FGSC A4 / ATCC 38163 / CBS 112.46 / NRRL 194 / M139) (Aspergillus nidulans)).